The chain runs to 259 residues: Large ribosomal subunit protein uL4 (259 aa).

The disordered stretch occupies residues 47-67 (WGTDPMAGKRTTAESFGSGRG).

Belongs to the universal ribosomal protein uL4 family. In terms of assembly, part of the 50S ribosomal subunit.

Its function is as follows. One of the primary rRNA binding proteins, this protein initially binds near the 5'-end of the 23S rRNA. It is important during the early stages of 50S assembly. It makes multiple contacts with different domains of the 23S rRNA in the assembled 50S subunit and ribosome. In terms of biological role, forms part of the polypeptide exit tunnel. The chain is Large ribosomal subunit protein uL4 from Methanosphaera stadtmanae (strain ATCC 43021 / DSM 3091 / JCM 11832 / MCB-3).